A 210-amino-acid chain; its full sequence is Na(+)-translocating NADH-quinone reductase subunit D (210 aa).

6 helical membrane-spanning segments follow: residues 14 to 34 (PIVS…ALAV), 42 to 62 (LVMT…ISML), 72 to 92 (IIVQ…VLQA), 103 to 123 (VFVG…AYAM), 131 to 151 (FMDG…VGFV), and 178 to 198 (NGLL…IWII).

Belongs to the NqrDE/RnfAE family. In terms of assembly, composed of six subunits; NqrA, NqrB, NqrC, NqrD, NqrE and NqrF.

The protein resides in the cell inner membrane. The enzyme catalyses a ubiquinone + n Na(+)(in) + NADH + H(+) = a ubiquinol + n Na(+)(out) + NAD(+). In terms of biological role, NQR complex catalyzes the reduction of ubiquinone-1 to ubiquinol by two successive reactions, coupled with the transport of Na(+) ions from the cytoplasm to the periplasm. NqrA to NqrE are probably involved in the second step, the conversion of ubisemiquinone to ubiquinol. This Shewanella woodyi (strain ATCC 51908 / MS32) protein is Na(+)-translocating NADH-quinone reductase subunit D.